A 204-amino-acid chain; its full sequence is Putative AgrB-like protein (204 aa).

Helical transmembrane passes span 40–60, 87–107, 111–131, and 156–176; these read IILINVMKFAIVYGISLATGL, LNCTLISLAMFVLAPFVFQNI, NWIVLGTFAFILLNMFLFAPA, and LILTGIALLIPFAEMKTLIMV.

The protein belongs to the AgrB family.

It localises to the cell membrane. In terms of biological role, may be involved in the proteolytic processing of a quorum sensing system signal molecule precursor. The chain is Putative AgrB-like protein from Listeria welshimeri serovar 6b (strain ATCC 35897 / DSM 20650 / CCUG 15529 / CIP 8149 / NCTC 11857 / SLCC 5334 / V8).